The primary structure comprises 162 residues: Hydrogenase-2 operon protein HybE (162 aa).

The protein belongs to the HupJ family.

This chain is Hydrogenase-2 operon protein HybE (hybE), found in Escherichia coli O6:H1 (strain CFT073 / ATCC 700928 / UPEC).